Reading from the N-terminus, the 457-residue chain is MEGTDLVVKLLSTWLTLVGSLILLPSAFGLSLGISEIYMKILVKTLEWATLRIEKGAPKESVLKSPASMGIIQRDESPMEKGLSGLRGRDFELSDVFYFSKKGLEAIVEDEVTQRFSSEELVSWNLLTRTNVNFHYISPKLTIVWVLGVLVRYCFLLPLRVTLAFIGISLLIIGTTLVGQLPDSSLKNWLSELVHLTCCRICVRSLSGTIHYHNKQYRPQKGGICVANHTSPIDVLILATDGCYAMVGQVHGGLMGIIQRAMVKACPHVWFERSEIKDRHLVTKRLKEHIADKKKLPILIFPEGTCINNTSVMMFKKGSFEIGGTIYPVAIKYNPQFGDAFWNSSKYNLVSYLLRIMTSWAIVCDVWYMPPMTREEGEDAVQFANRVKSAIAVQGGLTELPWDGGLKRAKVKDTFKEEQQKTYSKMIVGNGSPSLALDSSTVDNHGSPEPAFRSESL.

Residues 14–34 (WLTLVGSLILLPSAFGLSLGI) traverse the membrane as a helical segment. Phosphoserine occurs at positions 68 and 77. The next 2 helical transmembrane spans lie at 137–157 (ISPK…CFLL) and 161–181 (VTLA…VGQL). The short motif at 229 to 234 (HTSPID) is the HXXXXD motif element. Residues 429-457 (GNGSPSLALDSSTVDNHGSPEPAFRSESL) are disordered. Polar residues predominate over residues 431–444 (GSPSLALDSSTVDN).

The protein belongs to the 1-acyl-sn-glycerol-3-phosphate acyltransferase family.

It is found in the endoplasmic reticulum membrane. The enzyme catalyses sn-glycerol 3-phosphate + an acyl-CoA = a 1-acyl-sn-glycero-3-phosphate + CoA. The catalysed reaction is a 1-acyl-sn-glycero-3-phosphate + an acyl-CoA = a 1,2-diacyl-sn-glycero-3-phosphate + CoA. It catalyses the reaction dodecanoyl-CoA + sn-glycerol 3-phosphate = 1-dodecanoyl-sn-glycerol 3-phosphate + CoA. It carries out the reaction sn-glycerol 3-phosphate + hexadecanoyl-CoA = 1-hexadecanoyl-sn-glycero-3-phosphate + CoA. The enzyme catalyses sn-glycerol 3-phosphate + (9Z)-octadecenoyl-CoA = 1-(9Z-octadecenoyl)-sn-glycero-3-phosphate + CoA. The catalysed reaction is (9Z,12Z)-octadecadienoyl-CoA + sn-glycerol 3-phosphate = 1-(9Z,12Z)-octadecadienoyl-sn-glycero-3-phosphate + CoA. It catalyses the reaction 1-tetradecanoyl-sn-glycerol 3-phosphate + (9Z)-octadecenoyl-CoA = 1-tetradecanoyl-2-(9Z)-octadecenoyl-sn-glycero-3-phosphate + CoA. It carries out the reaction 1-hexadecanoyl-sn-glycero-3-phosphate + (9Z)-octadecenoyl-CoA = 1-hexadecanoyl-2-(9Z-octadecenoyl)-sn-glycero-3-phosphate + CoA. The enzyme catalyses 1-(9Z-octadecenoyl)-sn-glycero-3-phosphate + (9Z)-octadecenoyl-CoA = 1,2-di-(9Z-octadecenoyl)-sn-glycero-3-phosphate + CoA. The catalysed reaction is 1-(6Z,9Z,12Z-octadecatrienoyl)-sn-glycero-3-phosphate + (9Z)-octadecenoyl-CoA = (6Z,9Z,12Z)-octadecatrienoyl-2-(9Z)-octadecenoyl-sn-glycero-3-phosphate + CoA. It catalyses the reaction 1-(9Z,12Z,15Z)-octadecatrienoyl-sn-glycero-3-phosphate + (9Z)-octadecenoyl-CoA = 1-(9Z,12Z,15Z)-octadecatrienoyl-2-(9Z)-octadecenoyl-sn-glycero-3-phosphate + CoA. It carries out the reaction 1-(9Z-octadecenoyl)-sn-glycero-3-phosphate + tetradecanoyl-CoA = 1-(9Z)-octadecenoyl-2-tetradecanoyl-sn-glycero-3-phosphate + CoA. The enzyme catalyses 1-(9Z-octadecenoyl)-sn-glycero-3-phosphate + hexadecanoyl-CoA = 1-(9Z)-octadecenoyl-2-hexadecanoyl-sn-glycero-3-phosphate + CoA. The catalysed reaction is 1-(9Z-octadecenoyl)-sn-glycero-3-phosphate + octadecanoyl-CoA = 1-(9Z-octadecenoyl)-2-octadecanoyl-sn-glycero-3-phosphate + CoA. It catalyses the reaction 1-(9Z-octadecenoyl)-sn-glycero-3-phosphate + (9Z,12Z)-octadecadienoyl-CoA = 1-(9Z)-octadecenoyl-2-(9Z,12Z)-octadecadienoyl-sn-glycero-3-phosphate + CoA. It carries out the reaction 1-(5Z,8Z,11Z,14Z-eicosatetraenoyl)-sn-glycero-3-phosphate + (9Z)-octadecenoyl-CoA = 1-(5Z,8Z,11Z,14Z)-eicosatetraenoyl-2-(9Z)-octadecenoyl-sn-glycero-3-phosphate + CoA. The protein operates within glycerolipid metabolism; triacylglycerol biosynthesis. It participates in phospholipid metabolism; CDP-diacylglycerol biosynthesis; CDP-diacylglycerol from sn-glycerol 3-phosphate: step 1/3. Converts glycerol-3-phosphate to 1-acyl-sn-glycerol-3-phosphate (lysophosphatidic acid or LPA) by incorporating an acyl moiety at the sn-1 position of the glycerol backbone. Also converts LPA into 1,2-diacyl-sn-glycerol-3-phosphate (phosphatidic acid or PA) by incorporating an acyl moiety at the sn-2 position of the glycerol backbone. Protects cells against lipotoxicity. The sequence is that of Glycerol-3-phosphate acyltransferase 3 from Rattus norvegicus (Rat).